Reading from the N-terminus, the 529-residue chain is Peptide chain release factor 3 (529 aa).

Positions 10–278 constitute a tr-type G domain; it reads ARRRTFAIIS…NFVDLAPAPR (269 aa). Residues 19–26, 87–91, and 141–144 contribute to the GTP site; these read SHPDAGKT, DTPGH, and NKLD.

The protein belongs to the TRAFAC class translation factor GTPase superfamily. Classic translation factor GTPase family. PrfC subfamily.

It is found in the cytoplasm. Its function is as follows. Increases the formation of ribosomal termination complexes and stimulates activities of RF-1 and RF-2. It binds guanine nucleotides and has strong preference for UGA stop codons. It may interact directly with the ribosome. The stimulation of RF-1 and RF-2 is significantly reduced by GTP and GDP, but not by GMP. This Nitratidesulfovibrio vulgaris (strain ATCC 29579 / DSM 644 / CCUG 34227 / NCIMB 8303 / VKM B-1760 / Hildenborough) (Desulfovibrio vulgaris) protein is Peptide chain release factor 3.